A 211-amino-acid polypeptide reads, in one-letter code: High frequency lysogenization protein HflD homolog (211 aa).

Belongs to the HflD family.

It is found in the cytoplasm. The protein localises to the cell membrane. The chain is High frequency lysogenization protein HflD homolog from Buchnera aphidicola subsp. Acyrthosiphon pisum (strain 5A).